Here is a 418-residue protein sequence, read N- to C-terminus: Mitochondrial outer membrane protein SLC25A46 (418 aa).

The tract at residues 1–30 is disordered; the sequence is MHPRRPDGFDGLGYRGGARDEQGFGGAFPA. S32 carries the post-translational modification Phosphoserine. Residues 44 to 93 are disordered; sequence TTPPDIPGSRNLHWGEKSPPYGVPTTSTPYEGPTEEPFSSGGGGSVQGQS. Residue T45 is modified to Phosphothreonine. A Solcar 1 repeat occupies 96–187; sequence QLNRFAGFGI…GIISEFTPLP (92 aa). A run of 6 helical transmembrane segments spans residues 103–123, 167–187, 202–222, 258–278, 314–334, and 382–402; these read FGIG…CIVL, FIVQ…TPLP, HLLL…ASLI, LLPL…HYII, FPEL…LYPL, and VFGF…HAAV. A Solcar 2 repeat occupies 311–413; the sequence is DAYFPELIAN…QITKIIYSTL (103 aa).

It belongs to the mitochondrial carrier (TC 2.A.29) family. Associates with the mitochondrial contact site and cristae organizing system (MICOS) complex. May associate with the endoplasmic reticulum membrane protein complex (EMC).

The protein localises to the mitochondrion outer membrane. Transmembrane protein of the mitochondrial outer membrane that controls mitochondrial organization. May regulate the assembly of the MICOS (mitochondrial contact site and cristae organizing system) complex which is essential to the biogenesis and dynamics of mitochondrial cristae, the inwards folds of the inner mitochondrial membrane. Through its interaction with the EMC (endoplasmic reticulum membrane protein complex), could regulate mitochondrial lipid homeostasis and thereby mitochondrial fission. This chain is Mitochondrial outer membrane protein SLC25A46, found in Homo sapiens (Human).